The chain runs to 610 residues: UvrABC system protein C (610 aa).

Residues 16–94 form the GIY-YIG domain; that stretch reads SQPGVYRMYD…IKLYQPRYNV (79 aa). Residues 204-239 form the UVR domain; it reads DQVLTQLIARMEKASQDLAFEEAARIRDQIQAVRRV.

It belongs to the UvrC family. In terms of assembly, interacts with UvrB in an incision complex.

It localises to the cytoplasm. In terms of biological role, the UvrABC repair system catalyzes the recognition and processing of DNA lesions. UvrC both incises the 5' and 3' sides of the lesion. The N-terminal half is responsible for the 3' incision and the C-terminal half is responsible for the 5' incision. The sequence is that of UvrABC system protein C from Salmonella enteritidis PT4 (strain P125109).